The primary structure comprises 1321 residues: Bile salt export pump (1321 aa).

Residues 1–62 (MSDSVILRSV…FSSSKDNWLM (62 aa)) are Cytoplasmic-facing. An ABC transmembrane type-1 1 domain is found at 62–385 (MFMGSVCALL…ASSCLEIFST (324 aa)). A helical membrane pass occupies residues 63–83 (FMGSVCALLHGMAQPGMIIVF). Residues 84–147 (GILTDIFVEY…VIKFSGIYAG (64 aa)) lie on the Extracellular side of the membrane. N109, N116, N122, and N125 each carry an N-linked (GlcNAc...) asparagine glycan. Residues 148–168 (VGVAVLILGYFQIRLWVITGA) traverse the membrane as a helical segment. The Cytoplasmic portion of the chain corresponds to 169-215 (RQIRKMRKFYFRRIMRMEIGWFDCTSVGELNSRFSDDINKIDEAIAD). The chain crosses the membrane as a helical span at residues 216–236 (QMALFLQRLSTALSGLLLGFY). The Extracellular segment spans residues 237–240 (RGWK). Residues 241 to 261 (LTLVILAVSPLIGIGAAVIGL) form a helical membrane-spanning segment. Over 262–319 (SVAKFTELELKAYAKAGSIADEVLSSIRTVAAFGGENKEVERYEKNLMFAQRWGIWKG) the chain is Cytoplasmic. The chain crosses the membrane as a helical span at residues 320 to 340 (MVMGFFTGYMWCLIFFCYALA). Residues 341–353 (FWYGSRLVLDEGE) lie on the Extracellular side of the membrane. A helical transmembrane segment spans residues 354–374 (YTPGTLIQIFLCVIIAAMNIG). The Cytoplasmic portion of the chain corresponds to 375–755 (NASSCLEIFS…KYNISEWPYI (381 aa)). In terms of domain architecture, ABC transporter 1 spans 420–656 (IEFHNVTFHY…KGVYFMLVTL (237 aa)). Residue 455–462 (GSSGAGKS) participates in ATP binding. T586 bears the Phosphothreonine mark. S587 carries the post-translational modification Phosphoserine. An interaction with HAX1 region spans residues 651–674 (FMLVTLQSQEDNTHKETGIKGKDT). A compositionally biased stretch (basic and acidic residues) spans 662 to 684 (NTHKETGIKGKDTTEGDTPERTF). The interval 662 to 722 (NTHKETGIKG…PLAIGDHKSS (61 aa)) is disordered. Phosphoserine is present on residues S692, S703, and S706. One can recognise an ABC transmembrane type-1 2 domain in the interval 755 to 1043 (ILVGALCAAI…TFSYTPSYAK (289 aa)). The helical transmembrane segment at 756–776 (LVGALCAAINGAVTPIYSLLF) threads the bilayer. Over 777–794 (SQILKTFSLVDKEQQRSE) the chain is Extracellular. Residues 795–815 (IYSMCLFFVILGCVSLFTQFL) form a helical membrane-spanning segment. Topologically, residues 816-869 (QGYNFAKSGELLTKRLRKFGFKAMLRQDIGWFDDLKNNPGVLTTRLATDASQVQ) are cytoplasmic. 2 consecutive transmembrane segments (helical) span residues 870–890 (GATGSQVGMMVNSFTNIFVAV) and 891–911 (LIAFLFNWKLSLVISVFFPFL). The Cytoplasmic portion of the chain corresponds to 912 to 979 (ALSGAVQTKM…SYKTAIRKAN (68 aa)). A helical membrane pass occupies residues 980-1000 (VYGLCYAFSQGISFLANSAAY). At 1001–1011 (RYGGYLIVYED) the chain is on the extracellular side. Residues 1012–1032 (LNFSYVFRVVSSIAMSATAVG) form a helical membrane-spanning segment. Residues 1033-1321 (RTFSYTPSYA…KLVITGAPIS (289 aa)) lie on the Cytoplasmic side of the membrane. The region spanning 1078-1316 (IDFIDCKFTY…KGAYYKLVIT (239 aa)) is the ABC transporter 2 domain. An ATP-binding site is contributed by 1113 to 1120 (GSSGCGKS). At S1321 the chain carries Phosphoserine.

It belongs to the ABC transporter superfamily. ABCB family. Multidrug resistance exporter (TC 3.A.1.201) subfamily. In terms of assembly, interacts with HAX1. Interacts with the adapter protein complex 2 (AP-2) throught AP2A2 or AP2A1; this interaction regulates cell membrane expression of ABCB11 through its internalization in a clathrin-dependent manner and its subsequent degradation. Post-translationally, N-glycosylated. Ubiquitinated; short-chain ubiquitination regulates cell-Surface expression of ABCB11. In terms of tissue distribution, expressed predominantly, if not exclusively in the liver, where it was further localized to the canalicular microvilli and to subcanalicular vesicles of the hepatocytes by in situ.

It localises to the apical cell membrane. The protein resides in the recycling endosome membrane. The protein localises to the endosome. Its subcellular location is the cell membrane. The enzyme catalyses cholate(in) + ATP + H2O = cholate(out) + ADP + phosphate + H(+). The catalysed reaction is taurocholate(in) + ATP + H2O = taurocholate(out) + ADP + phosphate + H(+). It catalyses the reaction glycocholate(in) + ATP + H2O = glycocholate(out) + ADP + phosphate + H(+). It carries out the reaction glycochenodeoxycholate(in) + ATP + H2O = glycochenodeoxycholate(out) + ADP + phosphate + H(+). The enzyme catalyses taurochenodeoxycholate(in) + ATP + H2O = taurochenodeoxycholate(out) + ADP + phosphate + H(+). The catalysed reaction is glycoursodeoxycholate(in) + ATP + H2O = glycoursodeoxycholate(out) + ADP + phosphate + H(+). It catalyses the reaction tauroursodeoxycholate(in) + ATP + H2O = tauroursodeoxycholate(out) + ADP + phosphate + H(+). It carries out the reaction taurodeoxycholate(in) + ATP + H2O = taurodeoxycholate(out) + ADP + phosphate + H(+). The enzyme catalyses taurolithocholate 3-sulfate(in) + ATP + H2O = taurolithocholate 3-sulfate(out) + ADP + phosphate + H(+). The catalysed reaction is pravastatin(in) + ATP + H2O = pravastatin(out) + ADP + phosphate + H(+). With respect to regulation, the uptake of taurocholate is inhibited by taurolithocholate sulfate with an IC(50) of 9 uM. Pravastatin competitively inhibits the transport of taurocholic acid. Cyclosporin A, glibenclamide, rifampicin and troglitazonestrongly competitively inhibit the transport activity of taurocholate. The canalicular transport activity of taurocholate is strongly dependent on canalicular membrane cholesterol content. The uptake of taurocholate is increased by short- and medium-chain fatty acids. Cholesterol increases transport capacity of taurocholate without affecting the affinity for the substrate. Functionally, catalyzes the transport of the major hydrophobic bile salts, such as taurine and glycine-conjugated cholic acid across the canalicular membrane of hepatocytes in an ATP-dependent manner, therefore participates in hepatic bile acid homeostasis and consequently to lipid homeostasis through regulation of biliary lipid secretion in a bile salts dependent manner. Transports taurine-conjugated bile salts more rapidly than glycine-conjugated bile salts. Also transports non-bile acid compounds, such as pravastatin and fexofenadine in an ATP-dependent manner and may be involved in their biliary excretion. This is Bile salt export pump from Mus musculus (Mouse).